The chain runs to 535 residues: Methylmalonate-semialdehyde/malonate-semialdehyde dehydrogenase [acylating], mitochondrial (535 aa).

The transit peptide at 1 to 32 directs the protein to the mitochondrion; that stretch reads MAAAVAAAAAVRSRILQVSSKVNSTWYPASSF. 4 positions are modified to N6-acetyllysine; alternate: K47, K52, K55, and K76. N6-succinyllysine; alternate occurs at positions 47, 52, 55, and 76. An N6-acetyllysine modification is found at K87. N6-acetyllysine; alternate occurs at positions 117 and 129. N6-succinyllysine; alternate occurs at positions 117 and 129. Positions 183, 185, 209, 212, 213, and 262 each coordinate NAD(+). At S262 the chain carries Phosphoserine. Position 298 is an N6-acetyllysine (K298). C317 acts as the Nucleophile in catalysis. An N6-acetyllysine mark is found at K330 and K331. 2 positions are modified to N6-acetyllysine; alternate: K364 and K376. An N6-succinyllysine; alternate mark is found at K364 and K376. At S380 the chain carries Phosphoserine. K391 carries the post-translational modification N6-succinyllysine. Position 417 (E417) interacts with NAD(+). K500 bears the N6-acetyllysine mark. K517 carries the post-translational modification N6-succinyllysine.

The protein belongs to the aldehyde dehydrogenase family. Homotetramer. In terms of tissue distribution, expressed in the head and flagellum of epididymal sperm but not in testicular sperm (at protein level). Kidney &gt; liver &gt; heart &gt; muscle &gt; brain.

The protein resides in the mitochondrion. It carries out the reaction 3-oxopropanoate + NAD(+) + CoA + H2O = hydrogencarbonate + acetyl-CoA + NADH + H(+). The catalysed reaction is 2-methyl-3-oxopropanoate + NAD(+) + CoA + H2O = propanoyl-CoA + hydrogencarbonate + NADH + H(+). It catalyses the reaction (R)-2-methyl-3-oxopropanoate + NAD(+) + CoA + H2O = propanoyl-CoA + hydrogencarbonate + NADH + H(+). The enzyme catalyses (S)-2-methyl-3-oxopropanoate + NAD(+) + CoA + H2O = propanoyl-CoA + hydrogencarbonate + NADH + H(+). Its function is as follows. Malonate and methylmalonate semialdehyde dehydrogenase involved in the catabolism of valine, thymine, and compounds catabolized by way of beta-alanine, including uracil and cytidine. This Rattus norvegicus (Rat) protein is Methylmalonate-semialdehyde/malonate-semialdehyde dehydrogenase [acylating], mitochondrial.